Here is a 139-residue protein sequence, read N- to C-terminus: 3-hydroxyacyl-[acyl-carrier-protein] dehydratase FabZ (139 aa).

Residue His47 is part of the active site.

Belongs to the thioester dehydratase family. FabZ subfamily.

Its subcellular location is the cytoplasm. The enzyme catalyses a (3R)-hydroxyacyl-[ACP] = a (2E)-enoyl-[ACP] + H2O. Involved in unsaturated fatty acids biosynthesis. Catalyzes the dehydration of short chain beta-hydroxyacyl-ACPs and long chain saturated and unsaturated beta-hydroxyacyl-ACPs. This is 3-hydroxyacyl-[acyl-carrier-protein] dehydratase FabZ from Oenococcus oeni (strain ATCC BAA-331 / PSU-1).